The sequence spans 255 residues: tRNA (guanine-N(1)-)-methyltransferase (255 aa).

S-adenosyl-L-methionine-binding positions include Gly117 and 137-142; that span reads IGDYVL.

The protein belongs to the RNA methyltransferase TrmD family. Homodimer.

It is found in the cytoplasm. It carries out the reaction guanosine(37) in tRNA + S-adenosyl-L-methionine = N(1)-methylguanosine(37) in tRNA + S-adenosyl-L-homocysteine + H(+). Specifically methylates guanosine-37 in various tRNAs. In Glaesserella parasuis serovar 5 (strain SH0165) (Haemophilus parasuis), this protein is tRNA (guanine-N(1)-)-methyltransferase.